The chain runs to 180 residues: Cell division protein SepF (180 aa).

A disordered region spans residues 14–81 (NSEDDEEFDN…SKITPISKSS (68 aa)). Residues 15-35 (SEDDEEFDNEDYYLDDEEEEE) are compositionally biased toward acidic residues. Positions 57–68 (TRRDTTPKEKPV) are enriched in basic and acidic residues. Residues 69–79 (KTTSKITPISK) show a composition bias toward low complexity.

It belongs to the SepF family. In terms of assembly, homodimer. Interacts with FtsZ.

It localises to the cytoplasm. In terms of biological role, cell division protein that is part of the divisome complex and is recruited early to the Z-ring. Probably stimulates Z-ring formation, perhaps through the cross-linking of FtsZ protofilaments. Its function overlaps with FtsA. This is Cell division protein SepF from Agathobacter rectalis (strain ATCC 33656 / DSM 3377 / JCM 17463 / KCTC 5835 / VPI 0990) (Eubacterium rectale).